Reading from the N-terminus, the 25-residue chain is Chlorocatechol 1,2-dioxygenase 1 (25 aa).

The protein belongs to the intradiol ring-cleavage dioxygenase family. The cofactor is Fe(3+).

It carries out the reaction 3,5-dichlorocatechol + O2 = (2E,4E)-2,4-dichloromuconate + 2 H(+). It participates in xenobiotic degradation; 2-(2,4-dichlorophenoxy)propanoate degradation. In Delftia acidovorans (Pseudomonas acidovorans), this protein is Chlorocatechol 1,2-dioxygenase 1 (tfdC).